The following is a 193-amino-acid chain: ATP-dependent protease subunit HslV (193 aa).

T12 is an active-site residue. Na(+) is bound by residues A167, C170, and T173.

It belongs to the peptidase T1B family. HslV subfamily. In terms of assembly, a double ring-shaped homohexamer of HslV is capped on each side by a ring-shaped HslU homohexamer. The assembly of the HslU/HslV complex is dependent on binding of ATP.

It is found in the cytoplasm. The enzyme catalyses ATP-dependent cleavage of peptide bonds with broad specificity.. With respect to regulation, allosterically activated by HslU binding. Its function is as follows. Protease subunit of a proteasome-like degradation complex believed to be a general protein degrading machinery. The protein is ATP-dependent protease subunit HslV of Bartonella quintana (strain Toulouse) (Rochalimaea quintana).